Consider the following 205-residue polypeptide: Guanylate kinase (205 aa).

The Guanylate kinase-like domain occupies 6–185; sequence GLLIVLSRPS…ACDRIKAIVV (180 aa). Residue 13-20 participates in ATP binding; the sequence is RPSGVGKG.

It belongs to the guanylate kinase family.

Its subcellular location is the cytoplasm. The enzyme catalyses GMP + ATP = GDP + ADP. Essential for recycling GMP and indirectly, cGMP. The chain is Guanylate kinase from Bacillus cereus (strain ATCC 14579 / DSM 31 / CCUG 7414 / JCM 2152 / NBRC 15305 / NCIMB 9373 / NCTC 2599 / NRRL B-3711).